A 288-amino-acid chain; its full sequence is MKAVAFPAKIANLSFPSNCCSLFFRSPATFLSPALPCRKLTKGIRGLEGLMSQCLSSSSQSLSFSSNSFSSQPESELLQALPSSKPKSPPLQLPWLIVGLGNPGKKYQGTRHNVGFEMVDALADAEGISMNTVNFKALFGKGVIGNIPIMLAKPQTFMNLSGESVGQIVSFYKIPLKQVLVVYDDLDLPFGKLRLLPKGGHGGHNGMRSIIDRLKGSRDFPRLRIGIGRPPGKMDTANFVLRQFNRQEQEELDHTFQTGLEAIRILLLEGFNKSATFVNTRKSMEQLS.

Residues 1 to 55 constitute a chloroplast transit peptide; it reads MKAVAFPAKIANLSFPSNCCSLFFRSPATFLSPALPCRKLTKGIRGLEGLMSQCL. Y107 contributes to the tRNA binding site. H112 serves as the catalytic Proton acceptor. F157, N159, and N205 together coordinate tRNA.

Belongs to the PTH family. As to quaternary structure, monomer.

The protein localises to the plastid. It localises to the chloroplast stroma. The catalysed reaction is an N-acyl-L-alpha-aminoacyl-tRNA + H2O = an N-acyl-L-amino acid + a tRNA + H(+). Functionally, the natural substrate for this enzyme may be peptidyl-tRNAs which drop off the ribosome during protein synthesis. The sequence is that of Peptidyl-tRNA hydrolase, chloroplastic from Arabidopsis thaliana (Mouse-ear cress).